We begin with the raw amino-acid sequence, 503 residues long: Probable cytosol aminopeptidase (503 aa).

Residues Lys-270 and Asp-275 each contribute to the Mn(2+) site. Lys-282 is a catalytic residue. Asp-293, Asp-352, and Glu-354 together coordinate Mn(2+). Arg-356 is a catalytic residue.

Belongs to the peptidase M17 family. Requires Mn(2+) as cofactor.

It is found in the cytoplasm. The catalysed reaction is Release of an N-terminal amino acid, Xaa-|-Yaa-, in which Xaa is preferably Leu, but may be other amino acids including Pro although not Arg or Lys, and Yaa may be Pro. Amino acid amides and methyl esters are also readily hydrolyzed, but rates on arylamides are exceedingly low.. The enzyme catalyses Release of an N-terminal amino acid, preferentially leucine, but not glutamic or aspartic acids.. Presumably involved in the processing and regular turnover of intracellular proteins. Catalyzes the removal of unsubstituted N-terminal amino acids from various peptides. This Shigella flexneri protein is Probable cytosol aminopeptidase.